Here is a 341-residue protein sequence, read N- to C-terminus: MSLALTLGDPAGIGPEILLKALAHLPSELLGQFFIAGTGQVLEETYARLCQQGQVAIDPAQLQLWEHPLDEVIVPGRPSVASGTASFAYLKTAIQRAIAGEVAGIVTAPISKACWQAAGYSFPGQTEVLAHLTGTAHVGMLFLGRSPVTHWVLTTLLATTHIPLQAVPRALTPEGLNEKLALLIQFLRERRHLERPRIAIAGLNPHSGEQGHLGQEEVTWLIPWLAAAQQQYPEVELIGPVPPDTLWIGAADAWWGRPAPATAYDAYLALYHDQGLIPVKMLAFREAVNTTIGLPFIRTSPDHGTAFDIAGTGVADPQSFLAAIAWAQTLSKGSVFPLTLA.

Thr126 is a substrate binding site. His161, His206, and His272 together coordinate a divalent metal cation. Positions 280, 289, and 298 each coordinate substrate.

Belongs to the PdxA family. In terms of assembly, homodimer. A divalent metal cation serves as cofactor.

It is found in the cytoplasm. It carries out the reaction 4-(phosphooxy)-L-threonine + NAD(+) = 3-amino-2-oxopropyl phosphate + CO2 + NADH. The protein operates within cofactor biosynthesis; pyridoxine 5'-phosphate biosynthesis; pyridoxine 5'-phosphate from D-erythrose 4-phosphate: step 4/5. Functionally, catalyzes the NAD(P)-dependent oxidation of 4-(phosphooxy)-L-threonine (HTP) into 2-amino-3-oxo-4-(phosphooxy)butyric acid which spontaneously decarboxylates to form 3-amino-2-oxopropyl phosphate (AHAP). The protein is 4-hydroxythreonine-4-phosphate dehydrogenase of Thermosynechococcus vestitus (strain NIES-2133 / IAM M-273 / BP-1).